The primary structure comprises 433 residues: Probable carboxypeptidase ATEG_02905 (433 aa).

Positions 1–18 (MKSAISLLLASAATYVGA) are cleaved as a signal peptide. Positions 20 to 40 (PHPEPPQLVLSPSTSTGVHGD) are disordered. Residue Asn-92 is glycosylated (N-linked (GlcNAc...) asparagine). Asp-161 is a Zn(2+) binding site. Glu-193 serves as the catalytic Proton acceptor. Glu-194 is a Zn(2+) binding site.

It belongs to the peptidase M20A family. Zn(2+) is required as a cofactor.

It localises to the secreted. This Aspergillus terreus (strain NIH 2624 / FGSC A1156) protein is Probable carboxypeptidase ATEG_02905.